We begin with the raw amino-acid sequence, 433 residues long: Enolase (433 aa).

Gln-167 lines the (2R)-2-phosphoglycerate pocket. Residue Glu-209 is the Proton donor of the active site. Mg(2+)-binding residues include Asp-246, Glu-291, and Asp-318. 4 residues coordinate (2R)-2-phosphoglycerate: Lys-343, Arg-372, Ser-373, and Lys-394. The active-site Proton acceptor is Lys-343.

The protein belongs to the enolase family. Component of the RNA degradosome, a multiprotein complex involved in RNA processing and mRNA degradation. Mg(2+) is required as a cofactor.

It localises to the cytoplasm. The protein localises to the secreted. It is found in the cell surface. It catalyses the reaction (2R)-2-phosphoglycerate = phosphoenolpyruvate + H2O. Its pathway is carbohydrate degradation; glycolysis; pyruvate from D-glyceraldehyde 3-phosphate: step 4/5. Catalyzes the reversible conversion of 2-phosphoglycerate (2-PG) into phosphoenolpyruvate (PEP). It is essential for the degradation of carbohydrates via glycolysis. The chain is Enolase from Pasteurella multocida (strain Pm70).